Here is a 478-residue protein sequence, read N- to C-terminus: Tubulin gamma chain (478 aa).

A GTP-binding site is contributed by 141–147 (AGGTGSG). The interval 451-478 (ISQKESSSLANENGNGANNKPGKSAMAL) is disordered. Residues 459–468 (LANENGNGAN) are compositionally biased toward polar residues.

This sequence belongs to the tubulin family.

The protein resides in the cytoplasm. The protein localises to the cytoskeleton. It localises to the microtubule organizing center. It is found in the centrosome. In terms of biological role, tubulin is the major constituent of microtubules. The gamma chain is found at microtubule organizing centers (MTOC) such as the spindle poles or the centrosome, suggesting that it is involved in the minus-end nucleation of microtubule assembly. The sequence is that of Tubulin gamma chain from Reticulomyxa filosa.